A 542-amino-acid chain; its full sequence is Serine/threonine-protein phosphatase 2A regulatory subunit pptr-1 (542 aa).

Disordered regions lie at residues 1 to 28 and 500 to 542; these read MHGSGHSLTGAPHQIPPPRTQGAATGGQ and DYLK…PAKK. A compositionally biased stretch (polar residues) spans 528 to 542; it reads KKSSTGSETTTPAKK.

It belongs to the phosphatase 2A regulatory subunit B56 family. Part of a complex consisting of a common heterodimeric core enzyme, composed of catalytic subunit let-92 and constant regulatory subunit paa-1, that associates with a variety of regulatory subunits which confer distinct properties to the holoenzyme. Interacts with akt-1 but not akt-2. Interacts with sgk-1. Interacts with P granule components meg-1, meg-3 and meg-4. As to expression, expressed in pharynx, vulva and spermatheca.

The protein resides in the cytoplasm. Functionally, probable regulatory subunit of serine/threonine-protein phosphatase let-92 which negatively regulates the insulin receptor signaling cascade composed of daf-2, age-1, akt-1, akt-2 and sgk-1 by promoting the dephosphorylation of akt-1 on 'Thr-350'. Negatively regulates several functions controlled by the insulin pathway including dauer formation, lifespan, fat storage and stress resistance. Plays a role in the asymmetric segregation of the P granule components during embryonic cell divisions but does not play an essential role in specifying germ cell fate. Within a PP2A phosphatase complex, acts redundantly with pptr-2, to dephosphorylate P granule components including meg-1 and meg-3 to promote the assembly and accumulation of zygotic P granules in the posterior cytoplasm during zygote polarization, and thus maintain P granule distribution and segregation in early stage embryos following meiosis. In adults, required to promote germ cell proliferation and differentiation when exposed to thermic stress. This chain is Serine/threonine-protein phosphatase 2A regulatory subunit pptr-1, found in Caenorhabditis elegans.